We begin with the raw amino-acid sequence, 100 residues long: Large ribosomal subunit protein uL23 (100 aa).

This sequence belongs to the universal ribosomal protein uL23 family. In terms of assembly, part of the 50S ribosomal subunit. Contacts protein L29, and trigger factor when it is bound to the ribosome.

Its function is as follows. One of the early assembly proteins it binds 23S rRNA. One of the proteins that surrounds the polypeptide exit tunnel on the outside of the ribosome. Forms the main docking site for trigger factor binding to the ribosome. The chain is Large ribosomal subunit protein uL23 from Colwellia psychrerythraea (strain 34H / ATCC BAA-681) (Vibrio psychroerythus).